Here is a 918-residue protein sequence, read N- to C-terminus: Nitrate reductase [NADH] (918 aa).

The segment at K25–S44 is disordered. C195 contributes to the Mo-molybdopterin binding site. The Cytochrome b5 heme-binding domain maps to S543–I618. Heme is bound by residues H578 and H601. One can recognise an FAD-binding FR-type domain in the interval N661–T774. Residues R714–T717, V731–Y735, F736, F743, I748–S750, and T801 each bind FAD.

It belongs to the nitrate reductase family. Homodimer. It depends on FAD as a cofactor. The cofactor is heme. Mo-molybdopterin is required as a cofactor.

The enzyme catalyses nitrite + NAD(+) + H2O = nitrate + NADH + H(+). Functionally, nitrate reductase is a key enzyme involved in the first step of nitrate assimilation in plants, fungi and bacteria. The protein is Nitrate reductase [NADH] of Cucurbita maxima (Pumpkin).